Here is a 228-residue protein sequence, read N- to C-terminus: Glucose-induced degradation protein 8 homolog (228 aa).

A LisH domain is found at 29-61 (SKSDLNKLVMNYLVIEGYQEAAAKFQEESSTQT). The CTLH domain maps to 67–124 (SIADRMAIRSAIQCGDVEKGIEIVNDLNPEILDTNPQLYFHLQQQKLIELIRKGMTAE).

This sequence belongs to the GID8 family.

It is found in the cytoplasm. The protein localises to the nucleus. Functionally, core component of the CTLH E3 ubiquitin-protein ligase complex that mediates ubiquitination and subsequent proteasomal degradation of target proteins. Acts as a positive regulator of Wnt signaling pathway by promoting beta-catenin (CTNNB1) nuclear accumulation. The protein is Glucose-induced degradation protein 8 homolog of Dictyostelium discoideum (Social amoeba).